A 447-amino-acid polypeptide reads, in one-letter code: Asparagine--tRNA ligase (447 aa).

Belongs to the class-II aminoacyl-tRNA synthetase family. As to quaternary structure, homodimer.

It localises to the cytoplasm. It carries out the reaction tRNA(Asn) + L-asparagine + ATP = L-asparaginyl-tRNA(Asn) + AMP + diphosphate + H(+). In Lactococcus lactis subsp. cremoris (strain SK11), this protein is Asparagine--tRNA ligase.